The following is a 126-amino-acid chain: Aspartate 1-decarboxylase (126 aa).

S25 acts as the Schiff-base intermediate with substrate; via pyruvic acid in catalysis. At S25 the chain carries Pyruvic acid (Ser). T57 lines the substrate pocket. Catalysis depends on Y58, which acts as the Proton donor. Residue 73–75 (GAA) participates in substrate binding.

It belongs to the PanD family. Heterooctamer of four alpha and four beta subunits. It depends on pyruvate as a cofactor. Is synthesized initially as an inactive proenzyme, which is activated by self-cleavage at a specific serine bond to produce a beta-subunit with a hydroxyl group at its C-terminus and an alpha-subunit with a pyruvoyl group at its N-terminus.

The protein resides in the cytoplasm. The catalysed reaction is L-aspartate + H(+) = beta-alanine + CO2. It participates in cofactor biosynthesis; (R)-pantothenate biosynthesis; beta-alanine from L-aspartate: step 1/1. Catalyzes the pyruvoyl-dependent decarboxylation of aspartate to produce beta-alanine. The chain is Aspartate 1-decarboxylase from Marinomonas sp. (strain MWYL1).